We begin with the raw amino-acid sequence, 452 residues long: 1,3-beta-glucanosyltransferase gel1 (452 aa).

Residues 1–19 (MKASAVTAALAVGASTVLA) form the signal peptide. Cysteines 71 and 100 form a disulfide. (1,3-beta-D-glucosyl)n is bound by residues tyrosine 89, asparagine 159, glutamate 160, aspartate 201, and arginine 206. Glutamate 160 acts as the Proton donor in catalysis. 2 cysteine pairs are disulfide-bonded: cysteine 215–cysteine 345 and cysteine 233–cysteine 264. Asparagine 249 carries N-linked (GlcNAc...) asparagine glycosylation. Catalysis depends on glutamate 261, which acts as the Nucleophile. Tyrosine 292 contributes to the (1,3-beta-D-glucosyl)n binding site. The span at 325–340 (EKTSNPSGDGNYNKTG) shows a compositional bias: polar residues. The interval 325–419 (EKTSNPSGDG…SGTSTSSKGA (95 aa)) is disordered. N-linked (GlcNAc...) asparagine glycosylation occurs at asparagine 337. Low complexity predominate over residues 393–419 (STATAEPGSGSATGSSSSGTSTSSKGA). Alanine 419 carries GPI-like-anchor amidated alanine lipidation. Residues 420 to 452 (AAGLTVPSLTMAPVVVGAVTLLSTVFGAGLVLL) constitute a propeptide, removed in mature form.

Belongs to the glycosyl hydrolase 72 family. The GPI-like anchor contains a phosphoceramide lipid group. The anchor position has not been determined.

Its subcellular location is the cell membrane. Functionally, splits internally a 1,3-beta-glucan molecule and transfers the newly generated reducing end (the donor) to the non-reducing end of another 1,3-beta-glucan molecule (the acceptor) forming a 1,3-beta linkage, resulting in the elongation of 1,3-beta-glucan chains in the cell wall. Involved in cell wall morphogenesis. The sequence is that of 1,3-beta-glucanosyltransferase gel1 (gel1) from Aspergillus fumigatus (strain CBS 144.89 / FGSC A1163 / CEA10) (Neosartorya fumigata).